The following is a 468-amino-acid chain: Cysteine--tRNA ligase (468 aa).

Zn(2+) is bound at residue cysteine 27. A 'HIGH' region motif is present at residues 29–39 (PTVYNYFHIGN). Residues cysteine 207, histidine 232, and glutamate 236 each coordinate Zn(2+). The 'KMSKS' region motif lies at 264 to 268 (KMAKS). Residue lysine 267 participates in ATP binding.

Belongs to the class-I aminoacyl-tRNA synthetase family. Monomer. The cofactor is Zn(2+).

The protein localises to the cytoplasm. It catalyses the reaction tRNA(Cys) + L-cysteine + ATP = L-cysteinyl-tRNA(Cys) + AMP + diphosphate. The sequence is that of Cysteine--tRNA ligase from Acetivibrio thermocellus (strain ATCC 27405 / DSM 1237 / JCM 9322 / NBRC 103400 / NCIMB 10682 / NRRL B-4536 / VPI 7372) (Clostridium thermocellum).